A 360-amino-acid polypeptide reads, in one-letter code: Capsular polysaccharide phosphotransferase LcbA (360 aa).

It belongs to the stealth family.

Its function is as follows. Part of a group II capsule biosynthesis locus. In Aeromonas hydrophila, this protein is Capsular polysaccharide phosphotransferase LcbA (lcbA).